Reading from the N-terminus, the 180-residue chain is Adenine phosphoribosyltransferase (180 aa).

Belongs to the purine/pyrimidine phosphoribosyltransferase family. Homodimer.

The protein localises to the cytoplasm. It catalyses the reaction AMP + diphosphate = 5-phospho-alpha-D-ribose 1-diphosphate + adenine. The protein operates within purine metabolism; AMP biosynthesis via salvage pathway; AMP from adenine: step 1/1. Functionally, catalyzes a salvage reaction resulting in the formation of AMP, that is energically less costly than de novo synthesis. The sequence is that of Adenine phosphoribosyltransferase from Butyrivibrio fibrisolvens.